The sequence spans 912 residues: Brevican core protein (912 aa).

The N-terminal stretch at 1 to 22 is a signal peptide; that stretch reads MAPLFLPLLATLVLAWIPVALA. The 120-residue stretch at 36 to 155 folds into the Ig-like V-type domain; that stretch reads RVRIAGDAPL…SSDAVEVKVK (120 aa). Cystine bridges form between cysteine 57/cysteine 137, cysteine 179/cysteine 250, cysteine 203/cysteine 224, cysteine 277/cysteine 352, and cysteine 301/cysteine 322. Asparagine 130 is a glycosylation site (N-linked (GlcNAc...) asparagine). Link domains are found at residues 157-252 and 257-354; these read VVFL…YCYA and GELF…YCFR. N-linked (GlcNAc...) asparagine glycosylation occurs at asparagine 337. Disordered regions lie at residues 408–427 and 438–651; these read IPII…PAEA and SIVP…SGDC. Serine 418 is subject to Phosphoserine. O-linked (Xyl...) (chondroitin sulfate) serine glycosylation is present at serine 418. Residues 448–463 are compositionally biased toward basic and acidic residues; that stretch reads EEGKVLEQEEKYRGEE. Residues 464–478 are compositionally biased toward acidic residues; the sequence is EKEEEEEEEEVEDEA. Residues 520-537 are compositionally biased toward pro residues; that stretch reads VSPPPYDEPEAPRPPRVL. The span at 603-617 shows a compositional bias: basic and acidic residues; it reads GDTRDLETPSEENSR. The region spanning 647 to 683 is the EGF-like domain; that stretch reads SSGDCVPSPCHNGGTCLEEEEGVRCLCLPGYGGDLCD. Cystine bridges form between cysteine 651-cysteine 662, cysteine 656-cysteine 671, cysteine 673-cysteine 682, cysteine 689-cysteine 700, cysteine 717-cysteine 809, cysteine 785-cysteine 801, cysteine 816-cysteine 859, and cysteine 845-cysteine 872. Positions 683-811 constitute a C-type lectin domain; that stretch reads DVGLHFCSPG…NYHLSYTCKM (129 aa). Residues 814–874 form the Sushi domain; sequence VSCGPPPELP…WGLPQISCVP (61 aa).

This sequence belongs to the aggrecan/versican proteoglycan family. In terms of assembly, interacts with TNR. O-glycosylated; contains chondroitin sulfate. As to expression, brain; expressed in cerebellar astrocytes but not in neurons.

Its subcellular location is the secreted. It is found in the extracellular space. It localises to the extracellular matrix. Functionally, may play a role in the terminally differentiating and the adult nervous system during postnatal development. Could stabilize interactions between hyaluronan (HA) and brain proteoglycans. The polypeptide is Brevican core protein (BCAN) (Bos taurus (Bovine)).